Consider the following 255-residue polypeptide: Hydroxyacylglutathione hydrolase (255 aa).

Zn(2+)-binding residues include His-52, His-54, Asp-56, His-57, His-108, Asp-130, and His-168.

It belongs to the metallo-beta-lactamase superfamily. Glyoxalase II family. As to quaternary structure, monomer. Zn(2+) is required as a cofactor.

It carries out the reaction an S-(2-hydroxyacyl)glutathione + H2O = a 2-hydroxy carboxylate + glutathione + H(+). Its pathway is secondary metabolite metabolism; methylglyoxal degradation; (R)-lactate from methylglyoxal: step 2/2. Thiolesterase that catalyzes the hydrolysis of S-D-lactoyl-glutathione to form glutathione and D-lactic acid. The sequence is that of Hydroxyacylglutathione hydrolase from Albidiferax ferrireducens (strain ATCC BAA-621 / DSM 15236 / T118) (Rhodoferax ferrireducens).